A 661-amino-acid polypeptide reads, in one-letter code: uncharacterized protein (661 aa).

A disordered region spans residues 25-52 (LLPSEPPVGDMNNEDSDTNTSITQSPTN). Polar residues predominate over residues 42–52 (TNTSITQSPTN). Residues 246-297 (SMPDIWNEEQHSIFVQQFILHGKKFGKIAEAVPGKNSKECVLHYYLTKRTTD) enclose the SANT domain. 4 disordered regions span residues 306–329 (TKTK…KSKG), 478–499 (YYEP…TRKE), 548–570 (PMKM…TFQL), and 604–633 (RIDE…PNSQ). Residues 308–328 (TKGRRRKKLLPSQRGGKKKSK) are compositionally biased toward basic residues. Basic and acidic residues predominate over residues 478 to 487 (YYEPKLEQHS). Residues 604 to 617 (RIDELSVEDQEHTT) show a composition bias toward basic and acidic residues.

It is found in the nucleus. This is an uncharacterized protein from Schizosaccharomyces pombe (strain 972 / ATCC 24843) (Fission yeast).